We begin with the raw amino-acid sequence, 367 residues long: 2-aminoethylphosphonate--pyruvate transaminase (367 aa).

At Lys194 the chain carries N6-(pyridoxal phosphate)lysine.

This sequence belongs to the class-V pyridoxal-phosphate-dependent aminotransferase family. PhnW subfamily. In terms of assembly, homodimer. Requires pyridoxal 5'-phosphate as cofactor.

It catalyses the reaction (2-aminoethyl)phosphonate + pyruvate = phosphonoacetaldehyde + L-alanine. Its function is as follows. Involved in phosphonate degradation. This is 2-aminoethylphosphonate--pyruvate transaminase from Klebsiella pneumoniae subsp. pneumoniae (strain ATCC 700721 / MGH 78578).